The primary structure comprises 824 residues: FT-interacting protein 1 (824 aa).

C2 domains follow at residues Trp-48–Tyr-170, Val-217–Phe-341, and Tyr-385–Tyr-522. 3 helical membrane passes run Ala-625 to Trp-645, Leu-657 to Phe-677, and Ala-764 to Phe-784.

This sequence belongs to the MCTP family. As to quaternary structure, interacts with RFT1 and PI4KG4. Specifically expressed in the phloem including companion cells.

It localises to the endoplasmic reticulum membrane. Functionally, involved in the export of the long day-specific flower-promoting signal (florigen) RFT1 from the phloem companion cells to sieve elements. Promotes flowering under long days through the transport of RFT1 from the leaves to the shoot apical meristem (SAM). The chain is FT-interacting protein 1 from Oryza sativa subsp. japonica (Rice).